Consider the following 667-residue polypeptide: DNA ligase (667 aa).

NAD(+) is bound by residues 32 to 36, 81 to 82, and Glu111; these read DSVYD and SL. Lys113 functions as the N6-AMP-lysine intermediate in the catalytic mechanism. Arg134, Glu168, Lys285, and Lys309 together coordinate NAD(+). Residues Cys403, Cys406, Cys421, and Cys426 each coordinate Zn(2+). The region spanning 588–667 is the BRCT domain; sequence VGDNPFAGKT…DNLIEQLNLI (80 aa).

Belongs to the NAD-dependent DNA ligase family. LigA subfamily. The cofactor is Mg(2+). Mn(2+) is required as a cofactor.

The catalysed reaction is NAD(+) + (deoxyribonucleotide)n-3'-hydroxyl + 5'-phospho-(deoxyribonucleotide)m = (deoxyribonucleotide)n+m + AMP + beta-nicotinamide D-nucleotide.. Its function is as follows. DNA ligase that catalyzes the formation of phosphodiester linkages between 5'-phosphoryl and 3'-hydroxyl groups in double-stranded DNA using NAD as a coenzyme and as the energy source for the reaction. It is essential for DNA replication and repair of damaged DNA. In Lysinibacillus sphaericus (strain C3-41), this protein is DNA ligase.